The chain runs to 600 residues: Epidermal growth factor receptor kinase substrate 8-like protein 3 (600 aa).

A PTB domain is found at 28-155 (QHRVEHLMTC…ALEEELEERP (128 aa)). Disordered stretches follow at residues 152–245 (EERP…PERD) and 429–452 (LHFP…PLSS). Residues 204–214 (SERSISPSSRS) are compositionally biased toward low complexity. A Phosphoserine modification is found at Ser238. An SH3 domain is found at 457 to 516 (RAALKMQVLYEFEARNAQELTVAQGEILEVLDQSKRWWLVKNEAGLTGYIPSNILEPLPA).

It belongs to the EPS8 family. In terms of assembly, interacts with ABI1. Part of a complex that contains SOS1, ABI1 and EPS8L2. Interacts with FASLG. In terms of tissue distribution, detected in embryonic gut. Detected in adult testis, placenta, adrenal gland and intestine.

The protein resides in the cytoplasm. This is Epidermal growth factor receptor kinase substrate 8-like protein 3 (Eps8l3) from Mus musculus (Mouse).